Reading from the N-terminus, the 245-residue chain is 5-oxoprolinase subunit A (245 aa).

It belongs to the LamB/PxpA family. In terms of assembly, forms a complex composed of PxpA, PxpB and PxpC.

The enzyme catalyses 5-oxo-L-proline + ATP + 2 H2O = L-glutamate + ADP + phosphate + H(+). Its function is as follows. Catalyzes the cleavage of 5-oxoproline to form L-glutamate coupled to the hydrolysis of ATP to ADP and inorganic phosphate. This chain is 5-oxoprolinase subunit A, found in Yersinia pseudotuberculosis serotype O:1b (strain IP 31758).